The chain runs to 374 residues: Histone acetyltransferase type B catalytic subunit (374 aa).

Interaction with histone H4 N-terminus regions lie at residues 42–44 and 194–196; these read DSE and YKY. Residues 135 to 303 enclose the N-acetyltransferase domain; sequence VVYKSSLVDD…ESSRKSLKLE (169 aa). The segment at 197 to 205 is interaction with HAT2; the sequence is WHYLGAKSF. Acetyl-CoA-binding positions include 220–222 and 227–233; these read FLI and QNKGHGS. Glu-255 serves as the catalytic Proton donor/acceptor. Acetyl-CoA is bound by residues Asn-258 and Arg-267. Ser-354 bears the Phosphoserine mark.

Belongs to the HAT1 family. In terms of assembly, component of the HAT-B complex composed of at least HAT1 and HAT2. In the cytoplasm, this complex binds to the histone H4 tail. In the nucleus, the HAT-B complex has an additional component, the histone H3/H4 chaperone HIF1.

Its subcellular location is the cytoplasm. It localises to the nucleus. It carries out the reaction L-lysyl-[protein] + acetyl-CoA = N(6)-acetyl-L-lysyl-[protein] + CoA + H(+). In terms of biological role, catalytic component of the histone acetylase B (HAT-B) complex. Acetylates 'Lys-12' of free histone H4 in the cytoplasm. The complex is also found in the nucleus, however it is not certain that it modifies histone H4 when packaged in chromatin. Histone H4 'Lys-12' acetylation is required for telomeric silencing. Has intrinsic substrate specificity that modifies lysine in recognition sequence GXGKXG. Involved in DNA double-strand break repair. This Saccharomyces cerevisiae (strain ATCC 204508 / S288c) (Baker's yeast) protein is Histone acetyltransferase type B catalytic subunit (HAT1).